The chain runs to 545 residues: Mitogen-activated protein kinase kinase kinase mom-4 (545 aa).

Over residues 1–21 (MDTSPHSKPSSSSASQSSHSP) the composition is skewed to low complexity. The tract at residues 1–35 (MDTSPHSKPSSSSASQSSHSPSPAPVTAPRKTRDS) is disordered. Positions 53–308 (NLNSHQLGRG…AECLQYFTAL (256 aa)) constitute a Protein kinase domain. ATP is bound by residues 59-67 (LGRGTYGIV) and Lys86. The active-site Proton acceptor is the Asp178. Residues 316 to 444 (NVPLADANTN…PIDDRRDSNE (129 aa)) are disordered. Composition is skewed to polar residues over residues 352-369 (NGRT…QAVN) and 396-411 (ASSS…QSEA).

The protein belongs to the protein kinase superfamily. STE Ser/Thr protein kinase family. MAP kinase kinase kinase subfamily. In terms of assembly, interacts with, and is activated by, tap-1. Mg(2+) is required as a cofactor.

It carries out the reaction L-seryl-[protein] + ATP = O-phospho-L-seryl-[protein] + ADP + H(+). The enzyme catalyses L-threonyl-[protein] + ATP = O-phospho-L-threonyl-[protein] + ADP + H(+). Functionally, part of the Wnt signaling pathway essential for the specification of the mesodermal cell fate in early embryos. Stimulates the wrm-1/lit-1-dependent phosphorylation of pop-1 and plays a role in the initial nuclear accumulation of wrm-1. The protein is Mitogen-activated protein kinase kinase kinase mom-4 of Caenorhabditis briggsae.